The chain runs to 143 residues: General odorant-binding protein 28a (143 aa).

Residues 1–21 (MQSTPIILVAIVLLGAALVRA) form the signal peptide. 3 disulfide bridges follow: Cys38–Cys69, Cys65–Cys123, and Cys113–Cys132.

As to expression, expressed in antenna, mostly on the medial and posterior surface of the third antennal segment.

The protein resides in the secreted. This Drosophila melanogaster (Fruit fly) protein is General odorant-binding protein 28a (Obp28a).